A 211-amino-acid chain; its full sequence is Large ribosomal subunit protein eL13 (211 aa).

Lys-16 carries the post-translational modification N6-acetyllysine. Ser-52, Ser-77, and Ser-106 each carry phosphoserine. Glycyl lysine isopeptide (Lys-Gly) (interchain with G-Cter in SUMO2) cross-links involve residues Lys-123 and Lys-145. Lys-174 is covalently cross-linked (Glycyl lysine isopeptide (Lys-Gly) (interchain with G-Cter in SUMO1); alternate). Glycyl lysine isopeptide (Lys-Gly) (interchain with G-Cter in SUMO2); alternate cross-links involve residues Lys-174 and Lys-177. Lys-177 carries the post-translational modification N6-acetyllysine; alternate.

This sequence belongs to the eukaryotic ribosomal protein eL13 family. In terms of assembly, component of the 60S large ribosomal subunit (LSU). In terms of tissue distribution, higher levels of expression in benign breast lesions than in carcinomas.

Its subcellular location is the cytoplasm. Component of the ribosome, a large ribonucleoprotein complex responsible for the synthesis of proteins in the cell. The small ribosomal subunit (SSU) binds messenger RNAs (mRNAs) and translates the encoded message by selecting cognate aminoacyl-transfer RNA (tRNA) molecules. The large subunit (LSU) contains the ribosomal catalytic site termed the peptidyl transferase center (PTC), which catalyzes the formation of peptide bonds, thereby polymerizing the amino acids delivered by tRNAs into a polypeptide chain. The nascent polypeptides leave the ribosome through a tunnel in the LSU and interact with protein factors that function in enzymatic processing, targeting, and the membrane insertion of nascent chains at the exit of the ribosomal tunnel. As part of the LSU, it is probably required for its formation and the maturation of rRNAs. Plays a role in bone development. This chain is Large ribosomal subunit protein eL13 (RPL13), found in Homo sapiens (Human).